Reading from the N-terminus, the 450-residue chain is Glutathione reductase (450 aa).

Residues Ser14, Gly15, Glu34, Thr41, Cys42, and Lys50 each coordinate FAD. Ser14 lines the glutathione pocket. Cysteines 42 and 47 form a disulfide. Tyr99 serves as a coordination point for glutathione. Residue Ala115 coordinates FAD. Ala175, Ile178, Glu181, Arg198, Arg204, and Gly262 together coordinate NADP(+). Residue Asp303 coordinates FAD. NADP(+) is bound at residue Glu309. FAD is bound at residue Thr311. Arg319 provides a ligand contact to glutathione. Residue Val342 coordinates NADP(+). His439 serves as a coordination point for FAD. The Proton acceptor role is filled by His439.

This sequence belongs to the class-I pyridine nucleotide-disulfide oxidoreductase family. Homodimer. It depends on FAD as a cofactor.

It is found in the cytoplasm. The catalysed reaction is 2 glutathione + NADP(+) = glutathione disulfide + NADPH + H(+). In terms of biological role, catalyzes the reduction of glutathione disulfide (GSSG) to reduced glutathione (GSH). Constitutes the major mechanism to maintain a high GSH:GSSG ratio in the cytosol. The protein is Glutathione reductase (gor) of Escherichia coli (strain K12).